Here is a 327-residue protein sequence, read N- to C-terminus: Phenylalanine--tRNA ligase alpha subunit (327 aa).

E252 contributes to the Mg(2+) binding site.

This sequence belongs to the class-II aminoacyl-tRNA synthetase family. Phe-tRNA synthetase alpha subunit type 1 subfamily. Tetramer of two alpha and two beta subunits. Mg(2+) is required as a cofactor.

The protein localises to the cytoplasm. It catalyses the reaction tRNA(Phe) + L-phenylalanine + ATP = L-phenylalanyl-tRNA(Phe) + AMP + diphosphate + H(+). In Cronobacter sakazakii (strain ATCC BAA-894) (Enterobacter sakazakii), this protein is Phenylalanine--tRNA ligase alpha subunit.